The chain runs to 99 residues: MAHTAFETSLDTLLEEPKMYRVLLLNDDWTAMDFVARILMEVFDKTSDEATAITLKIHNDGKGVCGIYTYDIAELKMQIVSQMAKQHGYPLRVITEEMP.

The protein belongs to the ClpS family. In terms of assembly, binds to the N-terminal domain of the chaperone ClpA.

Functionally, involved in the modulation of the specificity of the ClpAP-mediated ATP-dependent protein degradation. The protein is ATP-dependent Clp protease adapter protein ClpS of Helicobacter hepaticus (strain ATCC 51449 / 3B1).